The primary structure comprises 440 residues: L-gulonolactone oxidase (440 aa).

The FAD-binding PCMH-type domain maps to 17-187; that stretch reads YGCCPEMYFQ…LTVTLQCVPQ (171 aa). Position 54 is a pros-8alpha-FAD histidine (H54). The chain crosses the membrane as a helical span at residues 253 to 273; the sequence is FYLLEFLLWISTFLPGLVGWI.

This sequence belongs to the oxygen-dependent FAD-linked oxidoreductase family. It depends on FAD as a cofactor.

Its subcellular location is the microsome membrane. The protein localises to the endoplasmic reticulum membrane. The catalysed reaction is L-gulono-1,4-lactone + O2 = L-ascorbate + H2O2 + H(+). The protein operates within cofactor biosynthesis; L-ascorbate biosynthesis via UDP-alpha-D-glucuronate pathway; L-ascorbate from UDP-alpha-D-glucuronate: step 4/4. Functionally, oxidizes L-gulono-1,4-lactone to hydrogen peroxide and L-xylo-hexulonolactone which spontaneously isomerizes to L-ascorbate. This Bos taurus (Bovine) protein is L-gulonolactone oxidase (GULO).